Here is a 344-residue protein sequence, read N- to C-terminus: GTP 3',8-cyclase (344 aa).

A Radical SAM core domain is found at 19–245 (PFGRAVTYLR…DIPYRTGGPA (227 aa)). Residue R28 participates in GTP binding. Residues C35 and C39 each contribute to the [4Fe-4S] cluster site. Y41 contributes to the S-adenosyl-L-methionine binding site. C42 lines the [4Fe-4S] cluster pocket. R77 serves as a coordination point for GTP. S-adenosyl-L-methionine is bound at residue G81. GTP is bound at residue T111. S135 serves as a coordination point for S-adenosyl-L-methionine. K171 lines the GTP pocket. M205 lines the S-adenosyl-L-methionine pocket. Residues C268 and C271 each contribute to the [4Fe-4S] cluster site. 273–275 (RVR) provides a ligand contact to GTP. C285 contributes to the [4Fe-4S] cluster binding site.

Belongs to the radical SAM superfamily. MoaA family. As to quaternary structure, monomer and homodimer. [4Fe-4S] cluster is required as a cofactor.

It catalyses the reaction GTP + AH2 + S-adenosyl-L-methionine = (8S)-3',8-cyclo-7,8-dihydroguanosine 5'-triphosphate + 5'-deoxyadenosine + L-methionine + A + H(+). It participates in cofactor biosynthesis; molybdopterin biosynthesis. Catalyzes the cyclization of GTP to (8S)-3',8-cyclo-7,8-dihydroguanosine 5'-triphosphate. This is GTP 3',8-cyclase from Brucella abortus (strain S19).